A 2336-amino-acid chain; its full sequence is MVRFGDELGGRYGGTGGGERARGGGAGGAGGPGQGGLPPGQRVLYKQSIAQRARTMALYNPIPVKQNCFTVNRSLFVFSEDNVVRKYAKRITEWPPFEYMILATIIANCIVLALEQHLPDGDKTPMSERLDDTEPYFIGIFCFEAGIKIIALGFVFHKGSYLRNGWNVMDFVVVLTEILATAGTDFDLRTLRAVRVLRPLKLVSGIPSLQVVLKSIMKAMVPLLQIGLLLFFAILMFAIIGLEFYMGKFHKACFPNSTDAEPVGDFPCGKEAPARLCDSDTECREYWPGPNFGITNFDNILFAILTVFQCITMEGWTDILYNTNDAAGNTWNWLYFIPLIIIGSFFMLNLVLGVLSGEFAKERERVENRRAFLKLRRQQQIERELNGYLEWIFKAEEVMLAEEDKNAEEKSPLDAVLKRAATKKSRNDLIHAEEGEDRFVDLCAAGSPFARASLKSGKTESSSYFRRKEKMFRFLIRRMVKAQSFYWVVLCVVALNTLCVAMVHYNQPQRLTTALYFAEFVFLGLFLTEMSLKMYGLGPRSYFRSSFNCFDFGVIVGSIFEVVWAAIKPGTSFGISVLRALRLLRIFKVTKYWNSLRNLVVSLLNSMKSIISLLFLLFLFIVVFALLGMQLFGGQFNFQDETPTTNFDTFPAAILTVFQILTGEDWNAVMYHGIESQGGVSKGMFSSFYFIVLTLFGNYTLLNVFLAIAVDNLANAQELTKDEEEMEEAANQKLALQKAKEVAEVSPMSAANISIAARQQNSAKARSVWEQRASQLRLQNLRASCEALYSEMDPEERLRYASTRHVRPDMKTHMDRPLVVEPGRDGLRGPAGNKSKPEGTEATEGADPPRRHHRHRDRDKTSASTPAGGEQDRTDCPKAESTETGAREERARPRRSHSKEAPGADTQVRCERSRRHHRRGSPEEATEREPRRHRAHRHAQDSSKEGKEGTAPVLVPKGERRARHRGPRTGPRETENSEEPTRRHRAKHKVPPTLEPPEREVAEKESNVVEGDKETRNHQPKEPRCDLEAIAVTGVGSLHMLPSTCLQKVDEQPEDADNQRNVTRMGSQPSDPSTTVHVPVTLTGPPGEATVVPSANTDLEGQAEGKKEAEADDVLRRGPRPIVPYSSMFCLSPTNLLRRFCHYIVTMRYFEMVILVVIALSSIALAAEDPVRTDSFRNNALKYMDYIFTGVFTFEMVIKMIDLGLLLHPGAYFRDLWNILDFIVVSGALVAFAFSSFMGGSKGKDINTIKSLRVLRVLRPLKTIKRLPKLKAVFDCVVNSLKNVLNILIVYMLFMFIFAVIAVQLFKGKFFYCTDESKELERDCRGQYLDYEKEEVEAQPRQWKKYDFHYDNVLWALLTLFTVSTGEGWPMVLKHSVDATYEEQGPSPGFRMELSIFYVVYFVVFPFFFVNIFVALIIITFQEQGDKVMSECSLEKNERACIDFAISAKPLTRYMPQNKQSFQYKTWTFVVSPPFEYFIMAMIALNTVVLMMKFYDAPYEYELMLKCLNIVFTSMFSLECILKIIAFGVLNYFRDAWNVFDFVTVLGSITDILVTEIANNFINLSFLRLFRAARLIKLCRQGYTIRILLWTFVQSFKALPYVCLLIAMLFFIYAIIGMQVFGNIALDDGTSINRHNNFRTFLQALMLLFRSATGEAWHEIMLSCLGNRACDPHANASECGSDFAYFYFVSFIFLCSFLMLNLFVAVIMDNFEYLTRDSSILGPHHLDEFIRVWAEYDPAACGRISYNDMFEMLKHMSPPLGLGKKCPARVAYKRLVRMNMPISNEDMTVHFTSTLMALIRTALEIKLAPAGTKQHQCDAELRKEISSVWANLPQKTLDLLVPPHKPDEMTVGKVYAALMIFDFYKQNKTTRDQTHQAPGGLSQMGPVSLFHPLKATLEQTQPAVLRGARVFLRQKSATSLSNGGAIQTQESGIKESLSWGTQRTQDVLYEARAPLERGHSAEIPVGQPGALAVDVQMQNMTLRGPDGEPQPGLESQGRAASMPRLAAETQPAPNASPMKRSISTLAPRPHGTQLCNTVLDRPPPSQVSHHHHHRCHRRRDKKQRSLEKGPSLSVDTEGAPSTAAGSGLPHGEGSTGCRRERKQERGRSQERRQPSSSSSEKQRFYSCDRFGSREPPQPKPSLSSHPISPTAALEPGPHPQGSGSVNGSPLMSTSGASTPGRGGRRQLPQTPLTPRPSITYKTANSSPVHFAEGQSGLPAFSPGRLSRGLSEHNALLQKEPLSQPLASGSRIGSDPYLGQRLDSEASAHNLPEDTLTFEEAVATNSGRSSRTSYVSSLTSQSHPLRRVPNGYHCTLGLSTGVRARHSYHHPDQDHWC.

The interval 1–37 is disordered; that stretch reads MVRFGDELGGRYGGTGGGERARGGGAGGAGGPGQGGL. The Cytoplasmic segment spans residues 1–90; the sequence is MVRFGDELGG…DNVVRKYAKR (90 aa). Gly residues predominate over residues 10–37; that stretch reads GRYGGTGGGERARGGGAGGAGGPGQGGL. Arg-22 bears the Omega-N-methylarginine mark. One copy of the I repeat lies at 82 to 359; that stretch reads NVVRKYAKRI…LVLGVLSGEF (278 aa). Residues 91-114 form a helical membrane-spanning segment; the sequence is ITEWPPFEYMILATIIANCIVLAL. The Extracellular segment spans residues 115-131; that stretch reads EQHLPDGDKTPMSERLD. A helical membrane pass occupies residues 132–152; it reads DTEPYFIGIFCFEAGIKIIAL. The Cytoplasmic portion of the chain corresponds to 153–163; that stretch reads GFVFHKGSYLR. Residues 164-182 traverse the membrane as a helical segment; sequence NGWNVMDFVVVLTEILATA. Over 183-187 the chain is Extracellular; it reads GTDFD. Residues 188 to 211 form a helical membrane-spanning segment; it reads LRTLRAVRVLRPLKLVSGIPSLQV. Residues 212–221 lie on the Cytoplasmic side of the membrane; sequence VLKSIMKAMV. A helical transmembrane segment spans residues 222 to 244; the sequence is PLLQIGLLLFFAILMFAIIGLEF. The Extracellular segment spans residues 245-331; sequence YMGKFHKACF…NTNDAAGNTW (87 aa). An N-linked (GlcNAc...) asparagine glycan is attached at Asn-256. Residues 332–356 traverse the membrane as a helical segment; it reads NWLYFIPLIIIGSFFMLNLVLGVLS. Residues 357 to 483 are Cytoplasmic-facing; the sequence is GEFAKERERV…FLIRRMVKAQ (127 aa). Positions 379–396 are binding to the beta subunit; the sequence is QQIERELNGYLEWIFKAE. Ser-411 carries the post-translational modification Phosphoserine. 452–459 contacts ATP; the sequence is ASLKSGKT. An II repeat occupies 469–713; sequence EKMFRFLIRR…VFLAIAVDNL (245 aa). Residues 484 to 502 form a helical membrane-spanning segment; it reads SFYWVVLCVVALNTLCVAM. Over 503-512 the chain is Extracellular; the sequence is VHYNQPQRLT. Residues 513 to 535 form a helical membrane-spanning segment; sequence TALYFAEFVFLGLFLTEMSLKMY. Topologically, residues 536–545 are cytoplasmic; it reads GLGPRSYFRS. Residue Ser-545 participates in a 1,2-diacyl-sn-glycero-3-phospho-(1D-myo-inositol-4,5-bisphosphate) binding. A helical transmembrane segment spans residues 546–567; that stretch reads SFNCFDFGVIVGSIFEVVWAAI. Over 568–574 the chain is Extracellular; the sequence is KPGTSFG. A helical transmembrane segment spans residues 575–587; that stretch reads ISVLRALRLLRIF. 2 residues coordinate a 1,2-diacyl-sn-glycero-3-phospho-(1D-myo-inositol-4,5-bisphosphate): Arg-585 and Lys-588. Residues 588–605 are Cytoplasmic-facing; it reads KVTKYWNSLRNLVVSLLN. The chain crosses the membrane as a helical span at residues 606 to 631; it reads SMKSIISLLFLLFLFIVVFALLGMQL. At 632–683 the chain is on the extracellular side; sequence FGGQFNFQDETPTTNFDTFPAAILTVFQILTGEDWNAVMYHGIESQGGVSKG. The helical transmembrane segment at 684 to 710 threads the bilayer; that stretch reads MFSSFYFIVLTLFGNYTLLNVFLAIAV. At 711 to 1149 the chain is on the cytoplasmic side; it reads DNLANAQELT…FCHYIVTMRY (439 aa). Ser-746, Ser-749, and Ser-784 each carry phosphoserine. Disordered stretches follow at residues 800–1021 and 1051–1076; these read YAST…HQPK and EQPE…STTV. 6 stretches are compositionally biased toward basic and acidic residues: residues 806 to 827, 870 to 891, 920 to 930, 938 to 948, 970 to 981, and 996 to 1021; these read VRPD…RDGL, EQDR…EERA, GSPEEATEREP, HAQDSSKEGKE, GPRETENSEEPT, and PPER…HQPK. The span at 1059–1076 shows a compositional bias: polar residues; it reads QRNVTRMGSQPSDPSTTV. Ser-1067 is subject to Phosphoserine. The stretch at 1135–1421 is one III repeat; it reads NLLRRFCHYI…IFVALIIITF (287 aa). Residues 1150 to 1168 traverse the membrane as a helical segment; sequence FEMVILVVIALSSIALAAE. Residues 1169–1176 are Extracellular-facing; that stretch reads DPVRTDSF. The chain crosses the membrane as a helical span at residues 1177–1201; it reads RNNALKYMDYIFTGVFTFEMVIKMI. The Cytoplasmic portion of the chain corresponds to 1202–1215; it reads DLGLLLHPGAYFRD. The helical transmembrane segment at 1216 to 1240 threads the bilayer; it reads LWNILDFIVVSGALVAFAFSSFMGG. Residues 1241-1246 lie on the Extracellular side of the membrane; that stretch reads SKGKDI. A helical membrane pass occupies residues 1247–1267; it reads NTIKSLRVLRVLRPLKTIKRL. Residues 1268 to 1285 are Cytoplasmic-facing; the sequence is PKLKAVFDCVVNSLKNVL. The helical transmembrane segment at 1286–1305 threads the bilayer; the sequence is NILIVYMLFMFIFAVIAVQL. Residues 1306-1392 lie on the Extracellular side of the membrane; that stretch reads FKGKFFYCTD…EQGPSPGFRM (87 aa). The helical transmembrane segment at 1393–1418 threads the bilayer; it reads ELSIFYVVYFVVFPFFFVNIFVALII. The Cytoplasmic segment spans residues 1419 to 1473; that stretch reads ITFQEQGDKVMSECSLEKNERACIDFAISAKPLTRYMPQNKQSFQYKTWTFVVSP. One copy of the IV repeat lies at 1458–1711; sequence NKQSFQYKTW…LFVAVIMDNF (254 aa). The chain crosses the membrane as a helical span at residues 1474–1492; it reads PFEYFIMAMIALNTVVLMM. Residues 1493–1500 lie on the Extracellular side of the membrane; that stretch reads KFYDAPYE. Residues 1501-1525 traverse the membrane as a helical segment; it reads YELMLKCLNIVFTSMFSLECILKII. Topologically, residues 1526–1535 are cytoplasmic; sequence AFGVLNYFRD. Residues 1536–1557 form a helical membrane-spanning segment; it reads AWNVFDFVTVLGSITDILVTEI. Residues 1558–1563 are Extracellular-facing; that stretch reads ANNFIN. Asn-1563 is a glycosylation site (N-linked (GlcNAc...) asparagine). Residues 1564 to 1582 form a helical membrane-spanning segment; that stretch reads LSFLRLFRAARLIKLCRQG. Residues 1583–1601 lie on the Cytoplasmic side of the membrane; that stretch reads YTIRILLWTFVQSFKALPY. Residues 1602 to 1621 traverse the membrane as a helical segment; the sequence is VCLLIAMLFFIYAIIGMQVF. The Extracellular segment spans residues 1622–1683; that stretch reads GNIALDDGTS…ANASECGSDF (62 aa). N-linked (GlcNAc...) asparagine glycosylation occurs at Asn-1675. A helical transmembrane segment spans residues 1684–1707; it reads AYFYFVSFIFLCSFLMLNLFVAVI. Residues 1708–2336 lie on the Cytoplasmic side of the membrane; it reads MDNFEYLTRD…YHHPDQDHWC (629 aa). The EF-hand domain occupies 1724-1759; it reads HHLDEFIRVWAEYDPAACGRISYNDMFEMLKHMSPP. 3 residues coordinate Ca(2+): Asp-1737, Arg-1743, and Asp-1748. Positions 1981–2202 are disordered; that stretch reads TLRGPDGEPQ…TPRPSITYKT (222 aa). Basic residues predominate over residues 2048-2062; sequence SHHHHHRCHRRRDKK. Position 2065 is a phosphoserine (Ser-2065). Residues 2097–2113 show a composition bias toward basic and acidic residues; the sequence is CRRERKQERGRSQERRQ. Residues 2161 to 2177 show a composition bias toward polar residues; sequence GSGSVNGSPLMSTSGAS. Ser-2221, Ser-2230, and Ser-2253 each carry phosphoserine.

This sequence belongs to the calcium channel alpha-1 subunit (TC 1.A.1.11) family. CACNA1B subfamily. In terms of assembly, multisubunit complex consisting of alpha-1, alpha-2, beta and delta subunits in a 1:1:1:1 ratio. The channel activity is directed by the pore-forming and voltage-sensitive alpha-1 subunit. In many cases, this subunit is sufficient to generate voltage-sensitive calcium channel activity. The auxiliary subunits beta and alpha-2/delta linked by a disulfide bridge regulate the channel activity. Interacts with RIMS1. Interacts with FMR1 (via C-terminus); this interaction induces a decrease in the number of presynaptic functional CACNA1B channels at the cell surface. In terms of processing, phosphorylated in vitro by CaM-kinase II, PKA, PKC and CGPK. In terms of tissue distribution, central nervous system.

The protein resides in the membrane. The catalysed reaction is Ca(2+)(in) = Ca(2+)(out). Is specifically blocked by omega-conotoxin GVIA. Is specifically blocked by omega-conotoxin MVIIA (ziconotide). Is insensitive to dihydropyridines (DHP). In terms of biological role, voltage-sensitive calcium channels (VSCC) mediate the entry of calcium ions into excitable cells and are also involved in a variety of calcium-dependent processes, including muscle contraction, hormone or neurotransmitter release, gene expression, cell motility, cell division and cell death. This alpha-1B subunit gives rise to N-type calcium currents. N-type calcium channels belong to the 'high-voltage activated' (HVA) group. They are involved in pain signaling. Calcium channels containing alpha-1B subunit may play a role in directed migration of immature neurons. Mediates Ca(2+) release probability at hippocampal neuronal soma and synaptic terminals. The sequence is that of Voltage-dependent N-type calcium channel subunit alpha-1B (Cacna1b) from Rattus norvegicus (Rat).